The following is a 355-amino-acid chain: MSADAAAGEPLPRLCCLEKGPNGYGFHLHGEKGKVGQFIRLVEPGSPAEKSGLLAGDRLVEVNGENVEKETHQQVVSRIRAALNAVRLLVVDPETDERLKKLGVSIREELLRPQEKSEQAEPPAAADTHEAGDQNEAEKSHLRELRPRLCTMKKGPNGYGFNLHSDKSKPGQFIRAVDPDSPAEASGLRAQDRIVEVNGVCMEGKQHGDVVSAIKGGGDEAKLLVVDKETDEFFKKCKVIPSQEHLDGPLPEPFSNGEIQKESSREALVEPASESPRPALARSASSDTSEELNSQDSPKRQVSTEPSSTSSSSSDPILDLNISLAVAKERAHQKRSSKRAPQMDWSKKNELFSNL.

S2 carries the post-translational modification N-acetylserine. Phosphoserine is present on residues S2 and S46. Residues 14-94 (LCCLEKGPNG…AVRLLVVDPE (81 aa)) form the PDZ 1 domain. 2 stretches are compositionally biased toward basic and acidic residues: residues 110–119 (LLRPQEKSEQ) and 127–146 (DTHE…RELR). The segment at 110 to 146 (LLRPQEKSEQAEPPAAADTHEAGDQNEAEKSHLRELR) is disordered. A PDZ 2 domain is found at 149–229 (LCTMKKGPNG…EAKLLVVDKE (81 aa)). Residues 244–355 (EHLDGPLPEP…SKKNELFSNL (112 aa)) are disordered. Residues 259–268 (IQKESSREAL) show a composition bias toward basic and acidic residues. Phosphoserine occurs at positions 264, 275, 285, and 286. Residues 270–286 (EPASESPRPALARSASS) are compositionally biased toward low complexity. At T288 the chain carries Phosphothreonine. Phosphoserine is present on residues S289, S294, and S297. The span at 303–323 (STEPSSTSSSSSDPILDLNIS) shows a compositional bias: low complexity. The segment covering 345 to 355 (WSKKNELFSNL) has biased composition (basic and acidic residues).

In terms of assembly, homodimer, and heterodimer with NHERF2. Binds the N-termini of EZR, RDX and MSN. Binds the C-termini of PDGFRA, PDGFRB, ADRB2 and NOS2. Binds ARHGAP17, EPI64, RACK1, OPRK1, GNAQ, CTNNB1, PLCB3 and CLCN3. Forms a complex with CFTR and SLC4A7. Forms a complex with SLC4A7 and ATP6V1B1. Binds PDZK1. Binds the C-terminus of PAG1. In resting T-cells, part of a PAG1-NHERF1-MSN complex which is disrupted upon TCR activation. Directly interacts with HTR4. Interacts with MCC. Interacts with TRPC4 (via the PDZ-binding domain). Interacts (via the PDZ 1 domain) with PODXL (via the C-terminal PDZ-binding motif DTHL); interaction is not detected in glomerular epithelium cells. Interacts (via the PDZ 1 domain) with PODXL (via the C-terminal PDZ-binding motif DTHL); the interaction take place early in the secretory pathway and is necessary for its apical membrane sorting. Interacts with SLC34A1. Interacts with CFTR, SLC26A3 and SLC26A6. Interacts (via PDZ domains) with ACE2 (via PDZ-binding motif); the interaction may enhance ACE2 membrane residence. In terms of tissue distribution, expressed in spermatogenic cells.

Its subcellular location is the cytoplasm. It is found in the apical cell membrane. The protein localises to the cell projection. It localises to the filopodium. The protein resides in the ruffle. Its subcellular location is the microvillus. It is found in the endomembrane system. Functionally, scaffold protein that connects plasma membrane proteins with members of the ezrin/moesin/radixin family and thereby helps to link them to the actin cytoskeleton and to regulate their surface expression. Necessary for recycling of internalized ADRB2. Was first known to play a role in the regulation of the activity and subcellular location of SLC9A3. Necessary for cAMP-mediated phosphorylation and inhibition of SLC9A3. May enhance Wnt signaling. May participate in HTR4 targeting to microvilli. Involved in the regulation of phosphate reabsorption in the renal proximal tubules. Involved in sperm capacitation. May participate in the regulation of the chloride and bicarbonate homeostasis in spermatozoa. In Mus musculus (Mouse), this protein is Na(+)/H(+) exchange regulatory cofactor NHE-RF1 (Nherf1).